Reading from the N-terminus, the 375-residue chain is POU domain, class 3, transcription factor 1-B (375 aa).

3 disordered regions span residues 1-29 (MAAT…RMHQ), 56-139 (MSLT…QPLI), and 151-200 (MLGP…PSSD). Polar residues-rich tracts occupy residues 107 to 117 (VHQQTPSSHAW), 129 to 139 (SPGSNSHQPLI), and 151 to 160 (MLGPQASSLH). Basic and acidic residues predominate over residues 162–178 (SMRDPLHDDPGVHDTHV). The POU-specific domain maps to 194–268 (EDAPSSDDLE…LLNKWLEETD (75 aa)). Residues 286 to 345 (KRKKRTSIEVGVKGALENHFLKCPKPSAHEITSLADSLQLEKEVVRVWFCNRRQKEKRMT) constitute a DNA-binding region (homeobox).

This sequence belongs to the POU transcription factor family. Class-3 subfamily.

The protein resides in the nucleus. Acts as a transcription factor. May play a role in neuronal differentiation. This Xenopus laevis (African clawed frog) protein is POU domain, class 3, transcription factor 1-B (pou3f1-b).